The primary structure comprises 370 residues: UPF0284 protein PCC7424_2681 (370 aa).

It belongs to the UPF0284 family.

The polypeptide is UPF0284 protein PCC7424_2681 (Gloeothece citriformis (strain PCC 7424) (Cyanothece sp. (strain PCC 7424))).